The sequence spans 508 residues: Cytochrome P450 monooxygenase lepD (508 aa).

Residues 22–42 traverse the membrane as a helical segment; that stretch reads IAAAVAVVASIVIYLALSSFF. N-linked (GlcNAc...) asparagine glycans are attached at residues Asn-53 and Asn-416. Cys-454 provides a ligand contact to heme.

Belongs to the cytochrome P450 family. Requires heme as cofactor.

It localises to the membrane. Its function is as follows. Cytochrome P450 monooxygenase; part of the gene cluster 23 that mediates the biosynthesis of a family of 2-pyridones known as leporins. The hybrid PKS-NRPS synthetase lepA and the enoyl reductase lepG are responsible for fusion of phenylalanine with a hexaketide and subsequent release of the stable tetramic acid precursor, pre-leporin C. Because lepA lacks a designated enoylreductase (ER) domain, the required activity is provided the enoyl reductase lepG. It is possible that the dehydrogenase lepF also participates in production of pre-leporin C. Cytochrome P450 monooxygenase lepH is then required for the ring expansion step to yield leporin C. Leporin C is then presumably further oxidized by the N-hydroxylase lepD to form leporin B. LepI may possess a function in biosynthesis upstream of lepA. Leporin B is further oxidized in the presence of ferric ion to give the leporin B trimer-iron chelate, but whether or not this reaction is catalyzed by an enzyme in the pathway or by ferric ion is not determined yet. This is Cytochrome P450 monooxygenase lepD from Aspergillus flavus (strain ATCC 200026 / FGSC A1120 / IAM 13836 / NRRL 3357 / JCM 12722 / SRRC 167).